The following is a 228-amino-acid chain: MAKLKEPIIAINFKTYIEATGKRALEIAKAAEKVYKETGVTIVVAPQLVDLRMIAESVEIPVFAQHIDPIKPGSHTGHVLPEAVKEAGAVGTLLNHSENRMILADLEAAIRRAEEVGLMTMVCSNNPAVSAAVAALNPDYVAVEPPELIGTGIPVSKAKPEVITNTVELVKKVNPEVKVLCGAGISTGEDVKKAIELGTVGVLLASGVTKAKDPEKAIWDLVSGIIKE.

12–14 provides a ligand contact to substrate; sequence NFK. His-96 (electrophile) is an active-site residue. The Proton acceptor role is filled by Glu-144. Residues Ile-149, Gly-184, and 205–206 contribute to the substrate site; that span reads AS.

This sequence belongs to the triosephosphate isomerase family. As to quaternary structure, homotetramer; dimer of dimers.

Its subcellular location is the cytoplasm. The catalysed reaction is D-glyceraldehyde 3-phosphate = dihydroxyacetone phosphate. Its pathway is carbohydrate biosynthesis; gluconeogenesis. The protein operates within carbohydrate degradation; glycolysis; D-glyceraldehyde 3-phosphate from glycerone phosphate: step 1/1. Functionally, involved in the gluconeogenesis. Catalyzes stereospecifically the conversion of dihydroxyacetone phosphate (DHAP) to D-glyceraldehyde-3-phosphate (G3P). The chain is Triosephosphate isomerase from Pyrococcus furiosus (strain ATCC 43587 / DSM 3638 / JCM 8422 / Vc1).